The chain runs to 206 residues: Large ribosomal subunit protein uL4 (206 aa).

Residues Gly47–Gln75 are disordered.

It belongs to the universal ribosomal protein uL4 family. Part of the 50S ribosomal subunit.

In terms of biological role, one of the primary rRNA binding proteins, this protein initially binds near the 5'-end of the 23S rRNA. It is important during the early stages of 50S assembly. It makes multiple contacts with different domains of the 23S rRNA in the assembled 50S subunit and ribosome. Forms part of the polypeptide exit tunnel. The sequence is that of Large ribosomal subunit protein uL4 from Clostridium botulinum (strain ATCC 19397 / Type A).